The chain runs to 208 residues: ATP-dependent Clp protease proteolytic subunit (208 aa).

Serine 105 (nucleophile) is an active-site residue. Histidine 130 is a catalytic residue.

The protein belongs to the peptidase S14 family. In terms of assembly, fourteen ClpP subunits assemble into 2 heptameric rings which stack back to back to give a disk-like structure with a central cavity, resembling the structure of eukaryotic proteasomes.

The protein resides in the cytoplasm. It carries out the reaction Hydrolysis of proteins to small peptides in the presence of ATP and magnesium. alpha-casein is the usual test substrate. In the absence of ATP, only oligopeptides shorter than five residues are hydrolyzed (such as succinyl-Leu-Tyr-|-NHMec, and Leu-Tyr-Leu-|-Tyr-Trp, in which cleavage of the -Tyr-|-Leu- and -Tyr-|-Trp bonds also occurs).. Functionally, cleaves peptides in various proteins in a process that requires ATP hydrolysis. Has a chymotrypsin-like activity. Plays a major role in the degradation of misfolded proteins. This chain is ATP-dependent Clp protease proteolytic subunit, found in Xylella fastidiosa (strain 9a5c).